A 125-amino-acid polypeptide reads, in one-letter code: Large ribosomal subunit protein uL18 (125 aa).

The protein belongs to the universal ribosomal protein uL18 family. In terms of assembly, part of the 50S ribosomal subunit; part of the 5S rRNA/L5/L18/L25 subcomplex. Contacts the 5S and 23S rRNAs.

In terms of biological role, this is one of the proteins that bind and probably mediate the attachment of the 5S RNA into the large ribosomal subunit, where it forms part of the central protuberance. The protein is Large ribosomal subunit protein uL18 of Anaplasma marginale (strain Florida).